A 127-amino-acid polypeptide reads, in one-letter code: Photosystem II extrinsic protein U (127 aa).

An N-terminal signal peptide occupies residues 1-31 (MSRLFRRLSTLLLCSLLVLGVWLTQPLSVQA).

Belongs to the PsbU family. As to quaternary structure, PSII is composed of 1 copy each of membrane proteins PsbA, PsbB, PsbC, PsbD, PsbE, PsbF, PsbH, PsbI, PsbJ, PsbK, PsbL, PsbM, PsbT, PsbX, PsbY, PsbZ, Psb30/Ycf12, peripheral proteins PsbO, CyanoQ (PsbQ), PsbU, PsbV and a large number of cofactors. It forms dimeric complexes.

It localises to the cellular thylakoid membrane. Functionally, one of the extrinsic, lumenal subunits of photosystem II (PSII). PSII is a light-driven water plastoquinone oxidoreductase, using light energy to abstract electrons from H(2)O, generating a proton gradient subsequently used for ATP formation. The extrinsic proteins stabilize the structure of photosystem II oxygen-evolving complex (OEC), the ion environment of oxygen evolution and protect the OEC against heat-induced inactivation. This Synechococcus sp. (strain RCC307) protein is Photosystem II extrinsic protein U.